A 545-amino-acid chain; its full sequence is uncharacterized protein (545 aa).

Composition is skewed to basic and acidic residues over residues 34–44 and 53–63; these read PMNKQNEKLKT and PRNDYSRRVSR. Disordered stretches follow at residues 34 to 98, 269 to 296, and 415 to 444; these read PMNK…PESN, QNGT…PQDS, and ERPQ…SAPE. The span at 69–78 shows a compositional bias: polar residues; that stretch reads TDSSEQQITA. Basic and acidic residues predominate over residues 415–428; sequence ERPQRKTEHVKTPE. Positions 429-441 are enriched in polar residues; it reads ENLQTKNPTTMTS.

This is an uncharacterized protein from Mus musculus (Mouse).